The primary structure comprises 273 residues: Dermonecrotic toxin LruSicTox-alphaIC1d (273 aa).

Residue histidine 5 is part of the active site. Residues glutamate 25 and aspartate 27 each contribute to the Mg(2+) site. Histidine 41 functions as the Nucleophile in the catalytic mechanism. Cystine bridges form between cysteine 45–cysteine 51 and cysteine 47–cysteine 190. Residue aspartate 85 participates in Mg(2+) binding.

It belongs to the arthropod phospholipase D family. Class II subfamily. Mg(2+) is required as a cofactor. Expressed by the venom gland.

The protein resides in the secreted. The catalysed reaction is an N-(acyl)-sphingosylphosphocholine = an N-(acyl)-sphingosyl-1,3-cyclic phosphate + choline. It catalyses the reaction an N-(acyl)-sphingosylphosphoethanolamine = an N-(acyl)-sphingosyl-1,3-cyclic phosphate + ethanolamine. The enzyme catalyses a 1-acyl-sn-glycero-3-phosphocholine = a 1-acyl-sn-glycero-2,3-cyclic phosphate + choline. It carries out the reaction a 1-acyl-sn-glycero-3-phosphoethanolamine = a 1-acyl-sn-glycero-2,3-cyclic phosphate + ethanolamine. In terms of biological role, dermonecrotic toxins cleave the phosphodiester linkage between the phosphate and headgroup of certain phospholipids (sphingolipid and lysolipid substrates), forming an alcohol (often choline) and a cyclic phosphate. This toxin acts on sphingomyelin (SM). It may also act on ceramide phosphoethanolamine (CPE), lysophosphatidylcholine (LPC) and lysophosphatidylethanolamine (LPE), but not on lysophosphatidylserine (LPS), and lysophosphatidylglycerol (LPG). It acts by transphosphatidylation, releasing exclusively cyclic phosphate products as second products. Induces dermonecrosis, hemolysis, increased vascular permeability, edema, inflammatory response, and platelet aggregation. This Loxosceles rufescens (Mediterranean recluse spider) protein is Dermonecrotic toxin LruSicTox-alphaIC1d.